The chain runs to 577 residues: 5'-AMP-activated protein kinase subunit gamma (577 aa).

Residues 45–226 (QSEGVGGGEL…NNNNSNSNNN (182 aa)) form a disordered region. Over residues 58 to 88 (NNNTTNNNTPTNTTTTTNTNTTTMNNSNNNN) the composition is skewed to low complexity. Composition is skewed to polar residues over residues 106 to 121 (SIEQ…SQDG) and 138 to 155 (ESQS…NNNM). A compositionally biased stretch (low complexity) spans 165 to 226 (STDNKSSTNT…NNNNSNSNNN (62 aa)). 4 consecutive CBS domains span residues 279 to 341 (VIPI…KKPK), 364 to 426 (ERPS…QLPE), 438 to 499 (IGTF…LSPS), and 517 to 574 (QRPE…DVKS).

Belongs to the 5'-AMP-activated protein kinase gamma subunit family.

Functionally, AMPK may be responsible for the regulation of fatty acid synthesis by phosphorylation of acetyl-CoA carboxylase. This chain is 5'-AMP-activated protein kinase subunit gamma (prkag), found in Dictyostelium discoideum (Social amoeba).